The following is a 369-amino-acid chain: Choline kinase B2 (369 aa).

Belongs to the choline/ethanolamine kinase family. Mg(2+) is required as a cofactor.

The catalysed reaction is choline + ATP = phosphocholine + ADP + H(+). The protein operates within phospholipid metabolism; phosphatidylcholine biosynthesis; phosphocholine from choline: step 1/1. Functionally, catalyzes the first step in phosphatidylcholine biosynthesis. Phosphorylates choline. This chain is Choline kinase B2 (ckb-2), found in Caenorhabditis elegans.